We begin with the raw amino-acid sequence, 283 residues long: PTS system mannose-specific EIID component (283 aa).

Met1 is modified (N-formylmethionine). Over 1–14 (MVDTTQTTTEKKLT) the chain is Cytoplasmic. Positions 11–281 (KKLTQSDIRG…GIAGYACGLL (271 aa)) constitute a PTS EIID domain. The stretch at 15 to 52 (QSDIRGVFLRSNLFQGSWNFERMQALGFCFSMVPAIRR) is an intramembrane region. At 53-59 (LYPENNE) the chain is on the cytoplasmic side. An intramembrane segment occupies 60–92 (ARKQAIRRHLEFFNTQPFVAAPILGVTLALEEQ). The Cytoplasmic portion of the chain corresponds to 93–100 (RANGAEID). Positions 101–140 (DGAINGIKVGLMGPLAGVGDPIFWGTVRPVFAALGAGIAM) form a transmembrane segment. At 141-144 (SGSL) the chain is on the periplasmic side. The hydrophobic stretch at 145–173 (LGPLLFFILFNLVRLATRYYGVAYGYSKG) threads the membrane. The Cytoplasmic portion of the chain corresponds to 174 to 183 (IDIVKDMGGG). Over 184–209 (FLQKLTEGASILGLFVMGALVNKWTH) the chain traverses the membrane. The Periplasmic segment spans residues 210-241 (VNIPLVVSRITDQTGKEHVTTVQTILDQLMPG). A transmembrane span lies at residues 242-255 (LVPLLLTFACMWLL). Residues 256-261 (RKKVNP) lie on the Cytoplasmic side of the membrane. A transmembrane span lies at residues 262–280 (LWIIVGFFVIGIAGYACGL). Over 281-283 (LGL) the chain is Periplasmic.

In terms of assembly, homotrimer of protomers that are composed of two subunits, IIC and IID.

It localises to the cell inner membrane. Functionally, the phosphoenolpyruvate-dependent sugar phosphotransferase system (sugar PTS), a major carbohydrate active transport system, catalyzes the phosphorylation of incoming sugar substrates concomitantly with their translocation across the cell membrane. The enzyme II ManXYZ PTS system is involved in mannose transport. The polypeptide is PTS system mannose-specific EIID component (manZ) (Escherichia coli O157:H7).